Here is a 138-residue protein sequence, read N- to C-terminus: Ribosomal RNA large subunit methyltransferase H (138 aa).

Residues Leu57, Gly86, and Leu105 to Phe110 each bind S-adenosyl-L-methionine.

This sequence belongs to the RNA methyltransferase RlmH family. Homodimer.

It is found in the cytoplasm. The catalysed reaction is pseudouridine(1915) in 23S rRNA + S-adenosyl-L-methionine = N(3)-methylpseudouridine(1915) in 23S rRNA + S-adenosyl-L-homocysteine + H(+). In terms of biological role, specifically methylates the pseudouridine at position 1915 (m3Psi1915) in 23S rRNA. The sequence is that of Ribosomal RNA large subunit methyltransferase H from Prochlorococcus marinus (strain MIT 9312).